A 160-amino-acid chain; its full sequence is 6,7-dimethyl-8-ribityllumazine synthase (160 aa).

Residues phenylalanine 22, 57–59 (TYE), and 81–83 (TII) contribute to the 5-amino-6-(D-ribitylamino)uracil site. Residue 86–87 (QT) participates in (2S)-2-hydroxy-3-oxobutyl phosphate binding. The active-site Proton donor is histidine 89. Leucine 114 serves as a coordination point for 5-amino-6-(D-ribitylamino)uracil. Arginine 128 lines the (2S)-2-hydroxy-3-oxobutyl phosphate pocket.

The protein belongs to the DMRL synthase family. Forms an icosahedral capsid composed of 60 subunits, arranged as a dodecamer of pentamers.

The enzyme catalyses (2S)-2-hydroxy-3-oxobutyl phosphate + 5-amino-6-(D-ribitylamino)uracil = 6,7-dimethyl-8-(1-D-ribityl)lumazine + phosphate + 2 H2O + H(+). It functions in the pathway cofactor biosynthesis; riboflavin biosynthesis; riboflavin from 2-hydroxy-3-oxobutyl phosphate and 5-amino-6-(D-ribitylamino)uracil: step 1/2. Its function is as follows. Catalyzes the formation of 6,7-dimethyl-8-ribityllumazine by condensation of 5-amino-6-(D-ribitylamino)uracil with 3,4-dihydroxy-2-butanone 4-phosphate. This is the penultimate step in the biosynthesis of riboflavin. The chain is 6,7-dimethyl-8-ribityllumazine synthase from Buchnera aphidicola subsp. Acyrthosiphon pisum (strain APS) (Acyrthosiphon pisum symbiotic bacterium).